Reading from the N-terminus, the 258-residue chain is D-aminoacyl-tRNA deacylase (258 aa).

This sequence belongs to the DtdA deacylase family. In terms of assembly, monomer. Requires Zn(2+) as cofactor.

It catalyses the reaction a D-aminoacyl-tRNA + H2O = a tRNA + a D-alpha-amino acid + H(+). The catalysed reaction is glycyl-tRNA(Ala) + H2O = tRNA(Ala) + glycine + H(+). Functionally, D-aminoacyl-tRNA deacylase with broad substrate specificity. By recycling D-aminoacyl-tRNA to D-amino acids and free tRNA molecules, this enzyme counteracts the toxicity associated with the formation of D-aminoacyl-tRNA entities in vivo. The polypeptide is D-aminoacyl-tRNA deacylase (Cenarchaeum symbiosum (strain A)).